Consider the following 438-residue polypeptide: Aspartyl protease 25 (438 aa).

A signal peptide spans 1–23 (MAATTTIPLLLLLLAATVAAAAA). Positions 79-433 (YVVRAGLGSP…DVANSRVGFA (355 aa)) constitute a Peptidase A1 domain. The active site involves Asp97. The cysteines at positions 107 and 113 are disulfide-linked. N-linked (GlcNAc...) asparagine glycans are attached at residues Asn123, Asn193, and Asn282. Asp313 is an active-site residue. An intrachain disulfide couples Cys352 to Cys394.

The protein belongs to the peptidase A1 family.

In terms of biological role, anther-specific aspartic protease involved in tapetal programmed cell death (PCD). Directly regulated by the transcription factor EAT1/DTD in anthers during tapetum PCD and degeneration. This chain is Aspartyl protease 25, found in Oryza sativa subsp. japonica (Rice).